A 224-amino-acid polypeptide reads, in one-letter code: COMM domain-containing protein 5 (224 aa).

An N-acetylserine modification is found at Ser-2. Residues 151-215 (HVADFRWRVD…LVLKEMADLE (65 aa)) enclose the COMM domain.

Belongs to the COMM domain-containing protein 5 family. In terms of assembly, component of the commander complex consisting of the CCC subcomplex and the retriever subcomplex. Component of the CCC (COMMD/CCDC22/CCDC93) subcomplex consisting of COMMD1, COMMD2, COMMD3, COMMD4, COMMD5, COMMD6, COMMD7, COMMD8, COMMD9, COMMD10, CCDC22 and CCDC93; within the complex forms a heterodimer with COMMD10. Interacts (via COMM domain) with COMMD1 (via COMM domain). Interacts with RELA, RELB, NFKB1/p105. Interacts with CCDC22, CCDC93, SCNN1B, CUL2, CUL3, CUL4A, CUL4B, CUL7. Highly expressed in heart, stomach, jejunum, kidney, liver, and adrenal gland. Expression was generally higher in adult organs than in fetal tissues, particularly in heart, kidney, and liver.

The protein resides in the cytoplasm. It localises to the nucleus. In terms of biological role, scaffold protein in the commander complex that is essential for endosomal recycling of transmembrane cargos; the commander complex is composed of the CCC subcomplex and the retriever subcomplex. May modulate activity of cullin-RING E3 ubiquitin ligase (CRL) complexes. Negatively regulates cell proliferation. Negatively regulates cell cycle G2/M phase transition probably by transactivating p21/CDKN1A through the p53/TP53-independent signaling pathway. Involved in kidney proximal tubule morphogenesis. Down-regulates activation of NF-kappa-B. This chain is COMM domain-containing protein 5 (COMMD5), found in Homo sapiens (Human).